A 291-amino-acid polypeptide reads, in one-letter code: Protein ILRUN (291 aa).

The disordered stretch occupies residues 199 to 275 (NTQPHRKVEG…PSSHSNNLSV (77 aa)). Residues 257–275 (LSQNSVNLSPSSHSNNLSV) show a composition bias toward low complexity.

The protein resides in the cytoplasm. The protein localises to the nucleus. In terms of biological role, may have a roles as negative regulator of innate antiviral response. The protein is Protein ILRUN (ILRUN) of Gallus gallus (Chicken).